The sequence spans 628 residues: Phosphomethylpyrimidine synthase (628 aa).

Substrate is bound by residues Asn228, Met257, Tyr286, His322, 342–344, 383–386, and Glu422; these read SRG and DGLR. His426 is a Zn(2+) binding site. Tyr449 is a binding site for substrate. His490 is a Zn(2+) binding site. Residues Cys570, Cys573, and Cys578 each coordinate [4Fe-4S] cluster.

This sequence belongs to the ThiC family. In terms of assembly, homodimer. [4Fe-4S] cluster serves as cofactor.

It carries out the reaction 5-amino-1-(5-phospho-beta-D-ribosyl)imidazole + S-adenosyl-L-methionine = 4-amino-2-methyl-5-(phosphooxymethyl)pyrimidine + CO + 5'-deoxyadenosine + formate + L-methionine + 3 H(+). It participates in cofactor biosynthesis; thiamine diphosphate biosynthesis. Catalyzes the synthesis of the hydroxymethylpyrimidine phosphate (HMP-P) moiety of thiamine from aminoimidazole ribotide (AIR) in a radical S-adenosyl-L-methionine (SAM)-dependent reaction. This Methylibium petroleiphilum (strain ATCC BAA-1232 / LMG 22953 / PM1) protein is Phosphomethylpyrimidine synthase.